A 59-amino-acid chain; its full sequence is uncharacterized protein (59 aa).

This is an uncharacterized protein from Saccharomyces cerevisiae (strain ATCC 204508 / S288c) (Baker's yeast).